Consider the following 217-residue polypeptide: MNLVLMGLPGAGKGTQAEKIVETYGIPHISTGDMFRAAMKEGTPLGLQAKEYIDRGDLVPDEVTIGIVRERLSKDDCQNGFLLDGFPRTVAQAEALEAMLAEIGRKLDYVIHIDVRQDVLMERLTGRRICRNCGATYHLVFHPPAQPGVCDKCGGELYQRPDDNEATVANRLEVNTKQMKPLLDFYEQKGYLRHINGEQEMEKVFSDIRELLGGLTR.

10-15 (GAGKGT) contributes to the ATP binding site. The segment at 30–59 (STGDMFRAAMKEGTPLGLQAKEYIDRGDLV) is NMP. Residues threonine 31, arginine 36, 57 to 59 (DLV), 85 to 88 (GFPR), and glutamine 92 each bind AMP. The segment at 126-163 (GRRICRNCGATYHLVFHPPAQPGVCDKCGGELYQRPDD) is LID. Residue arginine 127 coordinates ATP. Zn(2+) contacts are provided by cysteine 130 and cysteine 133. Position 136–137 (136–137 (TY)) interacts with ATP. Zn(2+) is bound by residues cysteine 150 and cysteine 153. Positions 160 and 171 each coordinate AMP. Glutamine 199 contacts ATP.

This sequence belongs to the adenylate kinase family. As to quaternary structure, monomer.

It is found in the cytoplasm. The catalysed reaction is AMP + ATP = 2 ADP. The protein operates within purine metabolism; AMP biosynthesis via salvage pathway; AMP from ADP: step 1/1. Catalyzes the reversible transfer of the terminal phosphate group between ATP and AMP. Plays an important role in cellular energy homeostasis and in adenine nucleotide metabolism. The protein is Adenylate kinase of Geobacillus thermodenitrificans (strain NG80-2).